Reading from the N-terminus, the 115-residue chain is Viral Lymphotactin (115 aa).

Positions 1 to 19 (MRLLTILALCCVAIWVVES) are cleaved as a signal peptide. Cysteine 30 and cysteine 67 are joined by a disulfide.

This sequence belongs to the intercrine gamma family. Interacts with host XCR1. N-glycosylated and O-glycosylated.

The protein localises to the secreted. Its function is as follows. Chemoattractant for CD4-dendritic cells, but not for CD4+ dendritic cells, T-cells or B-cells. In Rat cytomegalovirus (isolate England) (RCMV-E), this protein is Viral Lymphotactin (vXCL1).